A 515-amino-acid polypeptide reads, in one-letter code: Protein FAM98A (515 aa).

Disordered regions lie at residues 297-410 and 432-515; these read VLMG…GYHG and SGYQ…HYTS. Residues 302–311 show a composition bias toward basic and acidic residues; the sequence is VPDRGGRPNE. Gly residues predominate over residues 382–394; sequence WTDGGSGSGGGYQ. The span at 444 to 456 shows a compositional bias: basic and acidic residues; that stretch reads RYQDGGHHGERGS. Positions 457 to 481 are enriched in gly residues; that stretch reads GRGGRGGRGGRGGRGSQGGGWGGRG. Residues 485–501 are compositionally biased toward low complexity; it reads YHQGGQFEQHFQHGGYQ. The span at 502 to 515 shows a compositional bias: polar residues; it reads YSHSGFGQGRHYTS.

This sequence belongs to the FAM98 family. In terms of assembly, interacts (via N- and C-terminus) with DDX1. Interacts (via N- and C-terminus) with C14orf166. Interacts with FAM98B. Interacts with PLEKHM1 (via N- and C-terminus).

Functionally, positively stimulates PRMT1-induced protein arginine methylation. Involved in skeletal homeostasis. Positively regulates lysosome peripheral distribution and ruffled border formation in osteoclasts. The chain is Protein FAM98A from Mus musculus (Mouse).